The following is a 308-amino-acid chain: Ribonuclease HIII (308 aa).

In terms of domain architecture, RNase H type-2 spans 91 to 308; it reads KNVIGSDEVG…TEKALKMVKK (218 aa). A divalent metal cation is bound by residues Asp97, Glu98, and Asp202.

It belongs to the RNase HII family. RnhC subfamily. Mn(2+) serves as cofactor. Requires Mg(2+) as cofactor.

The protein resides in the cytoplasm. The catalysed reaction is Endonucleolytic cleavage to 5'-phosphomonoester.. Functionally, endonuclease that specifically degrades the RNA of RNA-DNA hybrids. The polypeptide is Ribonuclease HIII (Listeria monocytogenes serotype 4b (strain F2365)).